The sequence spans 215 residues: uncharacterized protein (215 aa).

The helical transmembrane segment at 98–119 threads the bilayer; that stretch reads AAALAVAVASLCVCTLLLTHIV.

The protein localises to the membrane. This is an uncharacterized protein from Treponema pallidum (strain Nichols).